The chain runs to 238 residues: Proteasome subunit beta type-6 (238 aa).

The residue at position 2 (Ala-2) is an N-acetylalanine. Positions 2–33 (AAALAVRGAVSAPAFGPEALTPDWENREVSTG) are cleaved as a propeptide — removed in mature form. Thr-34 functions as the Nucleophile in the catalytic mechanism. Position 68 is a phosphothreonine (Thr-68).

Belongs to the peptidase T1B family. The 26S proteasome consists of a 20S proteasome core and two 19S regulatory subunits. The 20S proteasome core is a barrel-shaped complex made of 28 subunits that are arranged in four stacked rings. The two outer rings are each formed by seven alpha subunits, and the two inner rings are formed by seven beta subunits. The proteolytic activity is exerted by three beta-subunits PSMB5, PSMB6 and PSMB7.

Its subcellular location is the cytoplasm. The protein localises to the nucleus. It carries out the reaction Cleavage of peptide bonds with very broad specificity.. Functionally, component of the 20S core proteasome complex involved in the proteolytic degradation of most intracellular proteins. This complex plays numerous essential roles within the cell by associating with different regulatory particles. Associated with two 19S regulatory particles, forms the 26S proteasome and thus participates in the ATP-dependent degradation of ubiquitinated proteins. The 26S proteasome plays a key role in the maintenance of protein homeostasis by removing misfolded or damaged proteins that could impair cellular functions, and by removing proteins whose functions are no longer required. Associated with the PA200 or PA28, the 20S proteasome mediates ubiquitin-independent protein degradation. This type of proteolysis is required in several pathways including spermatogenesis (20S-PA200 complex) or generation of a subset of MHC class I-presented antigenic peptides (20S-PA28 complex). Within the 20S core complex, PSMB6 displays a peptidylglutamyl-hydrolyzing activity also termed postacidic or caspase-like activity, meaning that the peptides bond hydrolysis occurs directly after acidic residues. This is Proteasome subunit beta type-6 (Psmb6) from Rattus norvegicus (Rat).